Here is a 361-residue protein sequence, read N- to C-terminus: Phospho-N-acetylmuramoyl-pentapeptide-transferase (361 aa).

A run of 10 helical transmembrane segments spans residues 21 to 41 (YITF…FVIG), 72 to 92 (TPTM…LLWV), 94 to 114 (LANV…LIGF), 135 to 155 (LAWT…VTPH), 169 to 189 (LLVN…VGAS), 200 to 220 (GLAI…AYLS), 240 to 260 (LAVF…FNAP), 263 to 283 (MVFM…AVSV), 289 to 309 (LVLA…MVQV), and 338 to 358 (TVVI…LSTL).

The protein belongs to the glycosyltransferase 4 family. MraY subfamily. It depends on Mg(2+) as a cofactor.

It localises to the cell inner membrane. The enzyme catalyses UDP-N-acetyl-alpha-D-muramoyl-L-alanyl-gamma-D-glutamyl-meso-2,6-diaminopimeloyl-D-alanyl-D-alanine + di-trans,octa-cis-undecaprenyl phosphate = di-trans,octa-cis-undecaprenyl diphospho-N-acetyl-alpha-D-muramoyl-L-alanyl-D-glutamyl-meso-2,6-diaminopimeloyl-D-alanyl-D-alanine + UMP. Its pathway is cell wall biogenesis; peptidoglycan biosynthesis. Its function is as follows. Catalyzes the initial step of the lipid cycle reactions in the biosynthesis of the cell wall peptidoglycan: transfers peptidoglycan precursor phospho-MurNAc-pentapeptide from UDP-MurNAc-pentapeptide onto the lipid carrier undecaprenyl phosphate, yielding undecaprenyl-pyrophosphoryl-MurNAc-pentapeptide, known as lipid I. This Rhodospirillum centenum (strain ATCC 51521 / SW) protein is Phospho-N-acetylmuramoyl-pentapeptide-transferase.